A 212-amino-acid polypeptide reads, in one-letter code: Nucleoside triphosphate pyrophosphatase (212 aa).

The active-site Proton acceptor is Asp-79.

The protein belongs to the Maf family. Requires a divalent metal cation as cofactor.

The protein resides in the cytoplasm. The catalysed reaction is a ribonucleoside 5'-triphosphate + H2O = a ribonucleoside 5'-phosphate + diphosphate + H(+). The enzyme catalyses a 2'-deoxyribonucleoside 5'-triphosphate + H2O = a 2'-deoxyribonucleoside 5'-phosphate + diphosphate + H(+). Its function is as follows. Nucleoside triphosphate pyrophosphatase. May have a dual role in cell division arrest and in preventing the incorporation of modified nucleotides into cellular nucleic acids. This is Nucleoside triphosphate pyrophosphatase from Nocardia farcinica (strain IFM 10152).